A 274-amino-acid polypeptide reads, in one-letter code: 2,3,4,5-tetrahydropyridine-2,6-dicarboxylate N-succinyltransferase (274 aa).

Substrate is bound by residues Arg-106 and Asp-143.

The protein belongs to the transferase hexapeptide repeat family. As to quaternary structure, homotrimer.

Its subcellular location is the cytoplasm. It carries out the reaction (S)-2,3,4,5-tetrahydrodipicolinate + succinyl-CoA + H2O = (S)-2-succinylamino-6-oxoheptanedioate + CoA. Its pathway is amino-acid biosynthesis; L-lysine biosynthesis via DAP pathway; LL-2,6-diaminopimelate from (S)-tetrahydrodipicolinate (succinylase route): step 1/3. This chain is 2,3,4,5-tetrahydropyridine-2,6-dicarboxylate N-succinyltransferase, found in Rickettsia conorii (strain ATCC VR-613 / Malish 7).